A 488-amino-acid polypeptide reads, in one-letter code: BTB/POZ domain-containing protein 1 (488 aa).

Over residues 1–19 (MASLGSAAAGEPATGAEAE) the composition is skewed to low complexity. Residues 1–42 (MASLGSAAAGEPATGAEAEPGPPAPPPPPPPPPAPSPSALGP) are disordered. The segment covering 20–36 (PGPPAPPPPPPPPPAPS) has biased composition (pro residues). Residues 75-151 (SDVRFVLGKG…LYSDEVQIGP (77 aa)) form the BTB domain. Arg-85 is modified (omega-N-methylarginine). One can recognise a BACK domain in the interval 190–290 (LTQARLFDEP…IRFPLMTIEE (101 aa)).

Interacts (via C-terminus) with TOP1. Interacts with TRIM5 isoform Delta. Interacts with CUL3. In terms of tissue distribution, strongly expressed in heart and skeletal muscle. Weakly expressed in myoblast C2C12 cells, but strongly up-regulated upon their differentiation into myotubes.

Its subcellular location is the cytoplasm. It functions in the pathway protein modification; protein ubiquitination. Functionally, probable substrate-specific adapter of an E3 ubiquitin-protein ligase complex which mediates the ubiquitination and subsequent proteasomal degradation of target proteins. Seems to regulate expression levels and/or subnuclear distribution of TOP1, via an unknown mechanism. May play a role in mesenchymal differentiation where it promotes myogenic differentiation and suppresses adipogenesis. This is BTB/POZ domain-containing protein 1 (Btbd1) from Mus musculus (Mouse).